Reading from the N-terminus, the 93-residue chain is CRISPR-associated endoribonuclease Cas2 1 (93 aa).

Residue D8 participates in Mg(2+) binding.

It belongs to the CRISPR-associated endoribonuclease Cas2 protein family. In terms of assembly, homodimer, forms a heterotetramer with a Cas1 homodimer. The cofactor is Mg(2+).

Its function is as follows. CRISPR (clustered regularly interspaced short palindromic repeat), is an adaptive immune system that provides protection against mobile genetic elements (viruses, transposable elements and conjugative plasmids). CRISPR clusters contain sequences complementary to antecedent mobile elements and target invading nucleic acids. CRISPR clusters are transcribed and processed into CRISPR RNA (crRNA). Functions as a ssRNA-specific endoribonuclease. Involved in the integration of spacer DNA into the CRISPR cassette. This chain is CRISPR-associated endoribonuclease Cas2 1, found in Chloroflexus aurantiacus (strain ATCC 29366 / DSM 635 / J-10-fl).